The following is a 934-amino-acid chain: Leucine--tRNA ligase 1 (934 aa).

The 'HIGH' region motif lies at Pro41 to His51. The 'KMSKS' region signature appears at Lys616–Ser620. Lys619 serves as a coordination point for ATP.

Belongs to the class-I aminoacyl-tRNA synthetase family.

The protein localises to the cytoplasm. The enzyme catalyses tRNA(Leu) + L-leucine + ATP = L-leucyl-tRNA(Leu) + AMP + diphosphate. The sequence is that of Leucine--tRNA ligase 1 from Saccharolobus solfataricus (strain ATCC 35092 / DSM 1617 / JCM 11322 / P2) (Sulfolobus solfataricus).